A 106-amino-acid chain; its full sequence is Ferredoxin (106 aa).

[3Fe-4S] cluster is bound by residues C8 and C16. [4Fe-4S] cluster contacts are provided by C20, C39, C42, and C45. Residues 30 to 59 (RMLYIHPDECVDCGACEPVCPVEAIYYEDD) enclose the 4Fe-4S ferredoxin-type domain. Residue C49 participates in [3Fe-4S] cluster binding. The tract at residues 81–106 (PGGASKVGQTDNDPQAIKDLPPQGED) is disordered.

Requires [4Fe-4S] cluster as cofactor. The cofactor is [3Fe-4S] cluster.

Functionally, ferredoxins are iron-sulfur proteins that transfer electrons in a wide variety of metabolic reactions. This Mycolicibacterium smegmatis (Mycobacterium smegmatis) protein is Ferredoxin (fdxA).